The primary structure comprises 382 residues: 8-amino-7-oxononanoate synthase (382 aa).

Residues arginine 22 and arginine 29 each coordinate substrate. Residue 109-110 coordinates pyridoxal 5'-phosphate; it reads GF. Histidine 134 is a substrate binding site. Residues serine 182, 207-210, and 233-236 each bind pyridoxal 5'-phosphate; these read DDAH and TLSK. At lysine 236 the chain carries N6-(pyridoxal phosphate)lysine. Residue threonine 345 participates in substrate binding.

It belongs to the class-II pyridoxal-phosphate-dependent aminotransferase family. BioF subfamily. Homodimer. Requires pyridoxal 5'-phosphate as cofactor.

It carries out the reaction 6-carboxyhexanoyl-[ACP] + L-alanine + H(+) = (8S)-8-amino-7-oxononanoate + holo-[ACP] + CO2. It participates in cofactor biosynthesis; biotin biosynthesis. Functionally, catalyzes the decarboxylative condensation of pimeloyl-[acyl-carrier protein] and L-alanine to produce 8-amino-7-oxononanoate (AON), [acyl-carrier protein], and carbon dioxide. This is 8-amino-7-oxononanoate synthase from Granulibacter bethesdensis (strain ATCC BAA-1260 / CGDNIH1).